A 771-amino-acid chain; its full sequence is Tubulin monoglycylase TTLL3 (771 aa).

Residues 70–106 (PRPSFSQPRRHDHETETTDEGDSSDEDDLGEEVERDD) form a disordered region. Acidic residues predominate over residues 86–106 (TTDEGDSSDEDDLGEEVERDD). One can recognise a TTL domain in the interval 220-566 (EGEKMGEVHN…RRSERNTDTG (347 aa)). Residues Lys339, 345-346 (RG), 377-380 (QKYI), 390-392 (KFD), and 434-435 (CN) each bind ATP. Arg345 contacts a protein. Ser437 contacts L-glutamate. Residues Asp512, Glu525, and Asn527 each contribute to the Mg(2+) site. Glu525 is a binding site for ATP. 2 disordered regions span residues 605-640 (LIQSHPEPLSKSTNHKSSLLSSPCTSGKENQSEEVK) and 682-713 (TELHHPQRLSHTQPQSDRPHTHRTRSNLPTLY). A compositionally biased stretch (polar residues) spans 614–633 (SKSTNHKSSLLSSPCTSGKE).

It depends on Mg(2+) as a cofactor.

It localises to the cytoplasm. It is found in the cytoskeleton. Its subcellular location is the cell projection. The protein localises to the cilium. The protein resides in the cilium axoneme. It localises to the flagellum axoneme. It carries out the reaction L-glutamyl-[protein] + glycine + ATP = glycyl-L-glutamyl-[protein] + ADP + phosphate + H(+). In terms of biological role, monoglycylase which modifies alpha- and beta-tubulin, adding a single glycine on the gamma-carboxyl groups of specific glutamate residues to generate monoglycine side chains within the C-terminal tail of tubulin. Not involved in elongation step of the polyglycylation reaction. Preferentially glycylates a beta-tail peptide over the alpha-tail, although shifts its preference toward alpha-tail as beta-tail glutamylation increases. Competes with polyglutamylases for modification site on beta-tubulin substrate, thereby creating an anticorrelation between glycylation and glutamylation reactions. Not involved in elongation step of the polyglycylation reaction. In Danio rerio (Zebrafish), this protein is Tubulin monoglycylase TTLL3 (ttll3).